The sequence spans 280 residues: Diaminopimelate epimerase (280 aa).

Substrate-binding residues include asparagine 12, glutamine 45, and asparagine 65. Residue cysteine 74 is the Proton donor of the active site. Residues 75-76 (GN), asparagine 163, asparagine 196, and 214-215 (ER) contribute to the substrate site. Residue cysteine 223 is the Proton acceptor of the active site. Substrate is bound at residue 224-225 (GT).

Belongs to the diaminopimelate epimerase family. Homodimer.

It localises to the cytoplasm. The catalysed reaction is (2S,6S)-2,6-diaminopimelate = meso-2,6-diaminopimelate. It functions in the pathway amino-acid biosynthesis; L-lysine biosynthesis via DAP pathway; DL-2,6-diaminopimelate from LL-2,6-diaminopimelate: step 1/1. In terms of biological role, catalyzes the stereoinversion of LL-2,6-diaminopimelate (L,L-DAP) to meso-diaminopimelate (meso-DAP), a precursor of L-lysine and an essential component of the bacterial peptidoglycan. The chain is Diaminopimelate epimerase from Shewanella sediminis (strain HAW-EB3).